The chain runs to 186 residues: Transcriptional repressor NrdR (186 aa).

A zinc finger spans residues 3 to 34 (CPFCRHPDSRVVDSREAEEGAAIRRRRSCPAC). In terms of domain architecture, ATP-cone spans 46 to 136 (LRVRKRSGAT…VYLAFESLGD (91 aa)). Residues 149–169 (AGGGEPPVAGKPTTMPAATGA) form a disordered region.

This sequence belongs to the NrdR family. It depends on Zn(2+) as a cofactor.

Its function is as follows. Negatively regulates transcription of bacterial ribonucleotide reductase nrd genes and operons by binding to NrdR-boxes. The chain is Transcriptional repressor NrdR from Parafrankia sp. (strain EAN1pec).